A 367-amino-acid chain; its full sequence is Phosphoribosylaminoimidazole-succinocarboxamide synthase (367 aa).

This sequence belongs to the SAICAR synthetase family.

The enzyme catalyses 5-amino-1-(5-phospho-D-ribosyl)imidazole-4-carboxylate + L-aspartate + ATP = (2S)-2-[5-amino-1-(5-phospho-beta-D-ribosyl)imidazole-4-carboxamido]succinate + ADP + phosphate + 2 H(+). It participates in purine metabolism; IMP biosynthesis via de novo pathway; 5-amino-1-(5-phospho-D-ribosyl)imidazole-4-carboxamide from 5-amino-1-(5-phospho-D-ribosyl)imidazole-4-carboxylate: step 1/2. The protein is Phosphoribosylaminoimidazole-succinocarboxamide synthase of Shewanella oneidensis (strain ATCC 700550 / JCM 31522 / CIP 106686 / LMG 19005 / NCIMB 14063 / MR-1).